We begin with the raw amino-acid sequence, 210 residues long: Large ribosomal subunit protein uL4 (210 aa).

The tract at residues 46–89 (QGTASTLTRSEVRGGGRKPYKQKGTGRARQGSIRTPLRPGGGII) is disordered. The span at 60–71 (GGRKPYKQKGTG) shows a compositional bias: basic residues.

It belongs to the universal ribosomal protein uL4 family. Part of the 50S ribosomal subunit.

Its function is as follows. One of the primary rRNA binding proteins, this protein initially binds near the 5'-end of the 23S rRNA. It is important during the early stages of 50S assembly. It makes multiple contacts with different domains of the 23S rRNA in the assembled 50S subunit and ribosome. Forms part of the polypeptide exit tunnel. This Prochlorococcus marinus (strain MIT 9312) protein is Large ribosomal subunit protein uL4.